Consider the following 417-residue polypeptide: Dibenzothiophene monooxygenase (417 aa).

Residues tyrosine 96, 129-134 (NASSEN), 159-163 (KHFCS), arginine 282, 369-370 (AR), and histidine 391 each bind FMN. Positions 131-142 (SSENNSHVLDWK) are lid loop.

It belongs to the DszC flavin monooxygenase family. As to quaternary structure, homotetramer. Homodimer. Requires FAD as cofactor. NADH serves as cofactor.

Its subcellular location is the cytoplasm. It carries out the reaction dibenzothiophene + 2 FMNH2 + 2 O2 = dibenzothiophene 5,5-dioxide + 2 FMN + 2 H2O + 2 H(+). The catalysed reaction is dibenzothiophene + FMNH2 + O2 = dibenzothiophene 5-oxide + FMN + H2O + H(+). It catalyses the reaction dibenzothiophene 5-oxide + FMNH2 + O2 = dibenzothiophene 5,5-dioxide + FMN + H2O + H(+). The protein operates within sulfur metabolism; dibenzothiophene degradation. In terms of biological role, catalyzes the first step of the '4S' desulfurization pathway that removes covalently bound sulfur from dibenzothiophene (DBT) without breaking carbon-carbon bonds. Sulfur dioxygenase which converts DBT to DBT-sulfone (DBTO2 or DBT 5,5-dioxide) in a stepwise manner. In DBTO (dibenzothiophene-5-oxide) was reported not to be a substrate, in it is reported to be a substrate. Can also use benzyl sulfide and benzyl sulfoxide as substrates, although benzyl sulfoxide is a poor substrate. The pathway substrate specificity has been augmented using mutagenesis, however no mutations allowed use of alkylated thiophenes. The chain is Dibenzothiophene monooxygenase from Rhodococcus qingshengii.